Reading from the N-terminus, the 363-residue chain is Adenosine deaminase (363 aa).

N-acetylalanine is present on Ala-2. Residues His-15 and His-17 each coordinate Zn(2+). The substrate site is built by His-17 and Asp-19. Lys-54 bears the N6-acetyllysine mark. Gly-184 contributes to the substrate binding site. Zn(2+) is bound at residue His-214. Glu-217 serves as the catalytic Proton donor. Lys-232 carries the N6-acetyllysine modification. Asp-295 provides a ligand contact to Zn(2+). Substrate is bound at residue Asp-296.

It belongs to the metallo-dependent hydrolases superfamily. Adenosine and AMP deaminases family. Interacts with DPP4 (via extracellular domain). Interacts with PLG (via Kringle 4 domain); the interaction stimulates PLG activation when in complex with DPP4. It depends on Zn(2+) as a cofactor. Expressed in gastrointestinal tissues (at protein level).

Its subcellular location is the cell membrane. The protein localises to the cell junction. The protein resides in the cytoplasmic vesicle lumen. It is found in the cytoplasm. It localises to the lysosome. The catalysed reaction is adenosine + H2O + H(+) = inosine + NH4(+). The enzyme catalyses 2'-deoxyadenosine + H2O + H(+) = 2'-deoxyinosine + NH4(+). It carries out the reaction cordycepin + H2O + H(+) = 3'-deoxyinosine + NH4(+). Catalyzes the hydrolytic deamination of adenosine and 2-deoxyadenosine. Plays an important role in purine metabolism and in adenosine homeostasis. Modulates signaling by extracellular adenosine, and so contributes indirectly to cellular signaling events. Acts as a positive regulator of T-cell coactivation, by binding DPP4. Its interaction with DPP4 regulates lymphocyte-epithelial cell adhesion. Enhances dendritic cell immunogenicity by affecting dendritic cell costimulatory molecule expression and cytokines and chemokines secretion. Enhances CD4+ T-cell differentiation and proliferation. Acts as a positive modulator of adenosine receptors ADORA1 and ADORA2A, by enhancing their ligand affinity via conformational change. Stimulates plasminogen activation. Plays a role in male fertility. Plays a protective role in early postimplantation embryonic development. Also responsible for the deamination of cordycepin (3'-deoxyadenosine), a fungal natural product that shows antitumor, antibacterial, antifungal, antivirus, and immune regulation properties. In Bos taurus (Bovine), this protein is Adenosine deaminase (ADA).